Here is a 467-residue protein sequence, read N- to C-terminus: Mothers against decapentaplegic homolog 2 (467 aa).

Ser-2 carries the N-acetylserine modification. Position 8 is a phosphothreonine (Thr-8). Residues 10–176 (PVVKRLLGWK…YQRVETPVLP (167 aa)) enclose the MH1 domain. Lys-19 carries the post-translational modification N6-acetyllysine. Zn(2+) is bound by residues Cys-74, Cys-149, Cys-161, and His-166. Positions 207 to 217 (PAGIEPQSNYI) are enriched in polar residues. The segment at 207 to 251 (PAGIEPQSNYIPETPPPGYISEDGETSDQQLNQSMDTGSPAELSP) is disordered. A Phosphothreonine modification is found at Thr-220. Positions 221–225 (PPPGY) match the PY-motif motif. Positions 233 to 243 (SDQQLNQSMDT) are enriched in polar residues. Position 240 is a phosphoserine; by CAMK2 (Ser-240). 6 positions are modified to phosphoserine: Ser-245, Ser-250, Ser-255, Ser-458, Ser-460, and Ser-464. The 194-residue stretch at 274 to 467 (WCSIAYYELN…SPSVRCSSMS (194 aa)) folds into the MH2 domain. Residues Ser-465 and Ser-467 each carry the phosphoserine; by TGFBR1 modification.

Belongs to the dwarfin/SMAD family. Monomer; in the absence of TGF-beta. Heterodimer; in the presence of TGF-beta. Forms a heterodimer with co-SMAD, SMAD4, in the nucleus to form the transactivation complex SMAD2/SMAD4. Found in a complex with SMAD3 and TRIM33 upon addition of TGF-beta. Identified in a complex that contains at least ZNF451, SMAD2, SMAD3 and SMAD4. Interacts (via the MH2 domain) with ZFYVE9; may form trimers with the SMAD4 co-SMAD. Interacts with TAZ/WWRT1. Interacts with FOXH1. Interacts with SNW1. Interacts with CREB-binding protein (CBP) and EP300. Interacts with SNON. Interacts with ALK4/ACVR1B. Interacts with SKOR1. Interacts with SKOR2. Interacts with PRDM16. Interacts (via MH2 domain) with LEMD3. Interacts with RBPMS. Interacts with WWP1. Interacts (dephosphorylated form, via the MH1 and MH2 domains) with RANBP3 (via its C-terminal R domain); the interaction results in the export of dephosphorylated SMAD3 out of the nucleus and termination of the TGF-beta signaling. Interacts with PDPK1 (via PH domain). Interacts with DAB2; the interactions are enhanced upon TGF-beta stimulation. Interacts with USP15. Interacts with PPP5C. Interacts with LDLRAD4 (via the SMAD interaction motif). Interacts (via MH2 domain) with PMEPA1 (via the SMAD interaction motif). Interacts with ZFHX3. Interacts with ZNF451. Interacts with SMURF2 when phosphorylated on Ser-465/467. Interacts with PPM1A. Interacts with TGF-beta. Interacts with TGFBR1. Interacts with TGIF. Interacts with SMAD3 and TRIM33. Interacts with ZNF580. Interacts with NEDD4L in response to TGF-beta. Interacts with HGS. Interacts with AIP1. Interacts with WWP1. Interacts with PML. Interacts weakly with ZNF8. Interacts (when phosphorylated) with RNF111; RNF111 acts as an enhancer of the transcriptional responses by mediating ubiquitination and degradation of SMAD2 inhibitors. Interacts with YAP1 (when phosphorylated at 'Ser-112'). Interacts when phosphorylated with IPO7; the interaction facilitates translocation of SMAD2 to the nucleus. Interacts with MTMR4; negatively regulates TGF-beta signaling through SMAD2 dephosphorylation and retention in endosomes. In terms of processing, in response to TGF-beta, phosphorylated on the C-terminal SXS motif by TGF-beta and activin type 1 receptor kinases, phosphorylation declines progressively in a KMT5A-dependent manner. Phosphorylation in this motif is required for interaction with a number of proteins including SMURF2, SNON and SMAD4 in response to TGF-beta. Dephosphorylated in this motif by PPM1A leading to disruption of the SMAD2/3-SMAD4 complex, nuclear export and termination of the TGF-beta signaling. In response to decorin, the naturally occurring inhibitor of TGF-beta signaling, phosphorylated on Ser-240 by CaMK2. Phosphorylated by MAPK3 upon EGF stimulation; which increases transcriptional activity and stability, and is blocked by calmodulin. Phosphorylated by PDPK1. Acetylated on Lys-19 by coactivators in response to TGF-beta signaling, which increases transcriptional activity. Post-translationally, in response to TGF-beta, ubiquitinated by NEDD4L; which promotes its degradation. Monoubiquitinated, leading to prevent DNA-binding. Deubiquitination by USP15 alleviates inhibition and promotes activation of TGF-beta target genes. Ubiquitinated by RNF111, leading to its degradation: only SMAD2 proteins that are 'in use' are targeted by RNF111, RNF111 playing a key role in activating SMAD2 and regulating its turnover. In terms of tissue distribution, expressed in cardiomyocytes.

It localises to the cytoplasm. Its subcellular location is the nucleus. In terms of biological role, receptor-regulated SMAD (R-SMAD) that is an intracellular signal transducer and transcriptional modulator activated by TGF-beta (transforming growth factor) and activin type 1 receptor kinases. Binds the TRE element in the promoter region of many genes that are regulated by TGF-beta and, on formation of the SMAD2/SMAD4 complex, activates transcription. Promotes TGFB1-mediated transcription of odontoblastic differentiation genes in dental papilla cells. Positively regulates PDPK1 kinase activity by stimulating its dissociation from the 14-3-3 protein YWHAQ which acts as a negative regulator. This Rattus norvegicus (Rat) protein is Mothers against decapentaplegic homolog 2 (Smad2).